The sequence spans 422 residues: uncharacterized protein (422 aa).

Residues 1–22 (MIQNNPKSIGSSSNKSARSSGS) are disordered. Residues 7–22 (KSIGSSSNKSARSSGS) show a composition bias toward low complexity.

This is an uncharacterized protein from Acanthamoeba polyphaga mimivirus (APMV).